The sequence spans 433 residues: L-lysine 2,3-aminomutase (433 aa).

In terms of domain architecture, Radical SAM core spans 122 to 334 (HRYPDRVLFY…SLIGHTTGFA (213 aa)). C136, C140, and C143 together coordinate [4Fe-4S] cluster. Position 279 (C279) interacts with Zn(2+). K348 is subject to N6-(pyridoxal phosphate)lysine. Residues C389, C392, and C396 each contribute to the Zn(2+) site.

Belongs to the radical SAM superfamily. KamA family. Requires [4Fe-4S] cluster as cofactor. The cofactor is pyridoxal 5'-phosphate. Zn(2+) serves as cofactor.

The catalysed reaction is L-lysine = (3S)-3,6-diaminohexanoate. Functionally, catalyzes the interconversion of L-alpha-lysine and L-beta-lysine. Is involved in the biosynthesis pathway of N6-acetyl-beta-lysine, a compatible solute produced by methanogenic archaea that helps cells to cope with salt stress. The sequence is that of L-lysine 2,3-aminomutase (ablA) from Methanococcus maripaludis (strain DSM 14266 / JCM 13030 / NBRC 101832 / S2 / LL).